A 570-amino-acid chain; its full sequence is Glycine--tRNA ligase (570 aa).

Substrate-binding residues include R99 and E165. Residues 197–199, 207–212, 324–325, and 443–446 each bind ATP; these read RNE, IRLREF, EC, and GIDR. 212–216 provides a ligand contact to substrate; that stretch reads FTQAE. 439 to 443 is a binding site for substrate; sequence EPSFG.

It belongs to the class-II aminoacyl-tRNA synthetase family.

It localises to the cytoplasm. The enzyme catalyses tRNA(Gly) + glycine + ATP = glycyl-tRNA(Gly) + AMP + diphosphate. Catalyzes the attachment of glycine to tRNA(Gly). The chain is Glycine--tRNA ligase from Pyrococcus horikoshii (strain ATCC 700860 / DSM 12428 / JCM 9974 / NBRC 100139 / OT-3).